The chain runs to 380 residues: Polygalacturonase 2 (380 aa).

The first 20 residues, 1–20, serve as a signal peptide directing secretion; sequence MIAGSKLLMLGLFGALAVHA. Residues 21–38 constitute a propeptide that is removed on maturation; that stretch reads LPEPAKAQVTAAPKLEER. Cys42 and Cys60 are disulfide-bonded. 2 PbH1 repeats span residues 173–204 and 205–226; these read ATDL…DVGS and STGI…AVNS. The active-site Proton donor is the Asp219. A disulfide bridge links Cys221 with Cys237. His241 is a catalytic residue. PbH1 repeat units lie at residues 256-277, 285-307, and 319-364; these read VANV…RIKT, VKNV…VIEQ, and TDGV…SVSG. N-linked (GlcNAc...) asparagine glycosylation occurs at Asn287. 2 disulfides stabilise this stretch: Cys347/Cys352 and Cys371/Cys380.

This sequence belongs to the glycosyl hydrolase 28 family.

The protein localises to the secreted. It carries out the reaction (1,4-alpha-D-galacturonosyl)n+m + H2O = (1,4-alpha-D-galacturonosyl)n + (1,4-alpha-D-galacturonosyl)m.. In Penicillium olsonii, this protein is Polygalacturonase 2 (PG2).